The primary structure comprises 147 residues: Deoxyuridine 5'-triphosphate nucleotidohydrolase (147 aa).

Residue R24 coordinates Mg(2+). DUTP is bound by residues 68 to 70 (PRS), 82 to 85 (GVID), Y88, G93, I95, and R111.

This sequence belongs to the dUTPase family. Mg(2+) is required as a cofactor.

It catalyses the reaction dUTP + H2O = dUMP + diphosphate + H(+). Functionally, this enzyme is involved in nucleotide metabolism: it produces dUMP, the immediate precursor of thymidine nucleotides and it decreases the intracellular concentration of dUTP so that uracil cannot be incorporated into DNA. The polypeptide is Deoxyuridine 5'-triphosphate nucleotidohydrolase (OPG046) (Camelus).